Consider the following 89-residue polypeptide: uncharacterized protein (89 aa).

This is an uncharacterized protein from Klebsiella aerogenes (Enterobacter aerogenes).